The following is a 45-amino-acid chain: uncharacterized protein (45 aa).

A helical membrane pass occupies residues 10-27 (LLYFVLFVDIYGIFTNNI).

It localises to the membrane. This is an uncharacterized protein from Dictyostelium discoideum (Social amoeba).